Consider the following 52-residue polypeptide: Insulin (52 aa).

3 disulfides stabilise this stretch: cysteine 7–cysteine 38, cysteine 19–cysteine 51, and cysteine 37–cysteine 42.

It belongs to the insulin family. Heterodimer of a B chain and an A chain linked by two disulfide bonds.

Its subcellular location is the secreted. Insulin decreases blood glucose concentration. It increases cell permeability to monosaccharides, amino acids and fatty acids. It accelerates glycolysis, the pentose phosphate cycle, and glycogen synthesis in liver. The protein is Insulin (ins) of Acipenser gueldenstaedtii (Russian sturgeon).